The following is a 327-amino-acid chain: Sideroflexin FSF1 (327 aa).

Ala-2 bears the N-acetylalanine mark. 4 consecutive transmembrane segments (helical) span residues 98-118, 143-163, 179-199, and 272-292; these read NLVVTVGMLTPGLGTAGTVFW, SQLLTNYAAAVTASCGVALGL, LILGRLVPFAAVVSAGIVNVF, and ANLGLISVTMFSALPFALGIF.

The protein belongs to the sideroflexin family.

The protein resides in the mitochondrion membrane. Mitochondrial amino-acid transporter that mediates transport of serine into mitochondria. The chain is Sideroflexin FSF1 from Saccharomyces cerevisiae (strain ATCC 204508 / S288c) (Baker's yeast).